A 449-amino-acid chain; its full sequence is 23S rRNA (uracil(1939)-C(5))-methyltransferase RlmD (449 aa).

The TRAM domain maps to lysine 15–arginine 73. Residues cysteine 86, cysteine 92, cysteine 95, and cysteine 173 each coordinate [4Fe-4S] cluster. Positions 276, 305, 310, 326, 353, and 374 each coordinate S-adenosyl-L-methionine. Cysteine 400 functions as the Nucleophile in the catalytic mechanism.

It belongs to the class I-like SAM-binding methyltransferase superfamily. RNA M5U methyltransferase family. RlmD subfamily.

It catalyses the reaction uridine(1939) in 23S rRNA + S-adenosyl-L-methionine = 5-methyluridine(1939) in 23S rRNA + S-adenosyl-L-homocysteine + H(+). Catalyzes the formation of 5-methyl-uridine at position 1939 (m5U1939) in 23S rRNA. The chain is 23S rRNA (uracil(1939)-C(5))-methyltransferase RlmD from Pectobacterium carotovorum subsp. carotovorum (strain PC1).